The chain runs to 462 residues: Glycoprotein endo-alpha-1,2-mannosidase (462 aa).

The Cytoplasmic segment spans residues 1–9; sequence MAKFRRRTC. Residues 10–30 form a helical; Signal-anchor for type II membrane protein membrane-spanning segment; it reads IILSLFIVFIFSLMMGLKMLW. Over 31 to 462 the chain is Lumenal; the sequence is PNAASFGPPF…YALDQQLPAS (432 aa). Positions 60-462 are catalytic; the sequence is DFQRSDRIDM…YALDQQLPAS (403 aa).

Belongs to the glycosyl hydrolase 99 family. Undergoes proteolytic cleavage in the C-terminal region. In terms of tissue distribution, highly expressed in the liver and kidney.

The protein localises to the golgi apparatus membrane. It catalyses the reaction N-{alpha-Glc-(1-&gt;3)-alpha-Man-(1-&gt;2)-alpha-Man-(1-&gt;2)-alpha-Man-(1-&gt;3)-[alpha-Man-(1-&gt;2)-alpha-Man-(1-&gt;3)-[alpha-Man-(1-&gt;2)-alpha-Man-(1-&gt;6)]-alpha-Man-(1-&gt;6)]-beta-Man-(1-&gt;4)-beta-GlcNAc-(1-&gt;4)-beta-GlcNAc}-L-asparaginyl-[protein] + H2O = alpha-D-glucosyl-(1-&gt;3)-D-mannopyranose + N(4)-{alpha-D-Man-(1-&gt;2)-alpha-D-Man-(1-&gt;3)-[alpha-D-Man-(1-&gt;2)-alpha-D-Man-(1-&gt;3)-[alpha-D-Man-(1-&gt;2)-alpha-D-Man-(1-&gt;6)]-alpha-D-Man-(1-&gt;6)]-beta-D-Man-(1-&gt;4)-beta-D-GlaNAc-(1-&gt;4)-beta-D-GlcNAc}-L-asparaginyl-[protein] (N-glucan mannose isomer 8A1,2,3B1,2). The chain is Glycoprotein endo-alpha-1,2-mannosidase (Manea) from Rattus norvegicus (Rat).